The chain runs to 331 residues: Dof zinc finger protein DOF1.1 (331 aa).

A Dof-type zinc finger spans residues 77–131; sequence LKCPRCDSSNTKFCYYNNYNLTQPRHFCKGCRRYWTQGGALRNVPVGGGCRRNNK. Residues cysteine 79, cysteine 82, cysteine 104, and cysteine 107 each coordinate Zn(2+). 2 disordered regions span residues 121–166 and 291–331; these read PVGG…TNHQ and EEQP…NDLL. Low complexity predominate over residues 135–160; it reads NGNLKSSSSSSKQSSSVNAQSPSSGQ. A compositionally biased stretch (polar residues) spans 305-316; the sequence is GLTSPGNQTNQY.

In terms of assembly, interacts with OBF4. In terms of tissue distribution, expressed in the vasculature (mainly in the phloem and associated cell files) of cotyledons, leaves, roots, flower stalks and petals. The PEAR proteins (e.g. DOF2.4, DOF5.1, DOF3.2, DOF1.1, DOF5.6 and DOF5.3) form a short-range concentration gradient that peaks at protophloem sieve elements (PSE).

It localises to the nucleus. Functionally, transcription factor that binds specifically to a 5'-AA[AG]G-3' consensus core sequence. Enhances the DNA binding of OBF transcription factors to OCS elements. Involved in the regulation of root development. The PEAR proteins (e.g. DOF2.4, DOF5.1, DOF3.2, DOF1.1, DOF5.6 and DOF5.3) activate gene expression that promotes radial growth of protophloem sieve elements. Element of a regulatory network controlling indole glucosinolates (IGS) biosynthesis, probably by inducing the expression of accurate genes (e.g. CYP83B1). Promotes apical dominance. The polypeptide is Dof zinc finger protein DOF1.1 (Arabidopsis thaliana (Mouse-ear cress)).